The sequence spans 323 residues: DNA repair and recombination protein RadA (323 aa).

115–122 provides a ligand contact to ATP; sequence GEFGSGKT.

It belongs to the eukaryotic RecA-like protein family.

Its function is as follows. Involved in DNA repair and in homologous recombination. Binds and assemble on single-stranded DNA to form a nucleoprotein filament. Hydrolyzes ATP in a ssDNA-dependent manner and promotes DNA strand exchange between homologous DNA molecules. This Thermoplasma volcanium (strain ATCC 51530 / DSM 4299 / JCM 9571 / NBRC 15438 / GSS1) protein is DNA repair and recombination protein RadA.